The primary structure comprises 267 residues: Tryptophan synthase alpha chain (267 aa).

Residues glutamate 47 and aspartate 58 each act as proton acceptor in the active site.

The protein belongs to the TrpA family. Tetramer of two alpha and two beta chains.

The catalysed reaction is (1S,2R)-1-C-(indol-3-yl)glycerol 3-phosphate + L-serine = D-glyceraldehyde 3-phosphate + L-tryptophan + H2O. It participates in amino-acid biosynthesis; L-tryptophan biosynthesis; L-tryptophan from chorismate: step 5/5. The alpha subunit is responsible for the aldol cleavage of indoleglycerol phosphate to indole and glyceraldehyde 3-phosphate. This Chlorobium chlorochromatii (strain CaD3) protein is Tryptophan synthase alpha chain.